The sequence spans 1710 residues: Extracellular matrix protein A (1710 aa).

The first 22 residues, 1-22 (MKISIFILLLFISSMVIISVNA), serve as a signal peptide directing secretion. Cys-rich CT repeat units follow at residues 43–70 (NRWS…CDDE), 71–94 (NACT…VDDK), 95–117 (NPCT…CDDK), 118–141 (NACT…CDDN), 142–165 (NPCT…VDDN), 166–189 (NPCT…VDDL), 190–213 (NPCT…VDDN), 214–237 (NKCT…CDDN), 238–261 (NACT…CDDK), 262–285 (NPCT…VDDN), 286–309 (NPCT…VDDN), 310–333 (NQCT…TDDN), 334–357 (NPCT…VDDN), 358–381 (NKCT…TDDN), 382–405 (NACT…CDDK), 406–429 (KACT…CDDN), 430–453 (NPCT…VDDN), 454–477 (NPCT…VDDN), 478–501 (NKCT…TDDN), 502–525 (NACT…CDDK), 526–549 (KACT…CDDN), 550–573 (NPCT…VDDN), 574–597 (NPCT…VDDN), 598–621 (NKCT…TDDN), 622–645 (NACT…CDDS), 646–669 (NPCT…VDDN), 670–693 (NPCT…VDDN), 694–717 (NKCT…TDDN), 718–741 (NACT…CDDK), 742–765 (KACT…CDDN), 766–789 (NPCT…VDDN), 790–813 (NPCT…VDDN), 814–837 (NKCT…TDDN), 838–861 (NACT…CDDN), 862–885 (NKCT…CDDS), 886–909 (NPCT…VDDN), 910–933 (NPCT…VDDN), 934–957 (NKCT…TDDN), 958–981 (NACT…TDDN), 982–1005 (NACT…CDDS), 1006–1029 (NPCT…VDDN), 1030–1053 (NPCT…VDDN), 1054–1077 (NKCT…TDDN), 1078–1101 (NACT…CDDS), 1102–1125 (NPCT…VDDN), 1126–1149 (NPCT…VDDN), 1150–1173 (NKCT…CDDN), 1174–1197 (NACT…CDDR), 1198–1221 (NPCT…TDDS), 1222–1245 (NKCT…CDDN), 1246–1269 (NACT…CDDK), 1270–1293 (NPCT…VDDN), 1294–1317 (DKCT…CDDN), 1318–1341 (NACT…CDDS), 1342–1365 (NPCT…VDDN), 1366–1389 (NPCT…VDDN), 1390–1413 (NKCT…CDDN), 1414–1437 (NPCT…VDDN), 1438–1461 (DACT…TDDN), 1462–1485 (NKCT…CDDG), 1486–1509 (NKCT…CPKP), 1511–1534 (DKCS…CTSD), 1558–1581 (NKCQ…CDDG), 1582–1606 (NACT…LPKN), 1608–1632 (NKCI…CECD), and 1658–1682 (NPKT…VITS). N150 and N151 each carry an N-linked (GlcNAc...) asparagine glycan. Residues N270 and N271 are each glycosylated (N-linked (GlcNAc...) asparagine). The N-linked (GlcNAc...) asparagine glycan is linked to N415. An N-linked (GlcNAc...) asparagine glycan is attached at N535. N-linked (GlcNAc...) asparagine glycosylation occurs at N655. N-linked (GlcNAc...) asparagine glycosylation occurs at N751. N-linked (GlcNAc...) asparagine glycosylation is found at N871, N894, and N895. A glycan (N-linked (GlcNAc...) asparagine) is linked at N1015. N-linked (GlcNAc...) asparagine glycosylation is found at N1110 and N1111. An N-linked (GlcNAc...) asparagine glycan is attached at N1183. N1255 is a glycosylation site (N-linked (GlcNAc...) asparagine). N1351 carries an N-linked (GlcNAc...) asparagine glycan. N1530 carries an N-linked (GlcNAc...) asparagine glycan. N1624 is a glycosylation site (N-linked (GlcNAc...) asparagine).

It is found in the secreted. The polypeptide is Extracellular matrix protein A (ecmA) (Dictyostelium discoideum (Social amoeba)).